Here is a 758-residue protein sequence, read N- to C-terminus: Spastin (758 aa).

The segment at 1-99 (MVRTKNQSSS…PTTCSPRSGH (99 aa)) is disordered. The Cytoplasmic segment spans residues 1–121 (MVRTKNQSSS…KQNLYVVSFP (121 aa)). Residues 1–210 (MVRTKNQSSS…RPIQPLEMAA (210 aa)) are required for localization to punctate cytoplasmic foci. Composition is skewed to low complexity over residues 8 to 28 (SSSS…SSGA), 43 to 58 (RSSS…AGGS), 66 to 76 (SSNRRSPGSSP), and 85 to 95 (TDDLTPTTCSP). An intramembrane region (helical) is located at residues 122-142 (IIFLFNVLRSLIYQLFCIFRY). Topologically, residues 143 to 758 (LYGASTKVIY…WSQDYGDITI (616 aa)) are cytoplasmic. Composition is skewed to polar residues over residues 169–180 (SKEQQQSLNHPS) and 189–198 (QEQQLSNQPQ). Residues 169-203 (SKEQQQSLNHPSELSREGDGQEQQLSNQPQRFRPI) are disordered. The interval 208 to 758 (MAANRPGGGY…WSQDYGDITI (551 aa)) is sufficient for interaction with microtubules and microtubule severing. The MIT domain occupies 233-308 (HRRAFEYISK…SMARDRLHFL (76 aa)). 2 disordered regions span residues 353–375 (RVRS…SGRK) and 390–454 (NKSQ…ASTP). 2 stretches are compositionally biased toward polar residues: residues 390 to 406 (NKSQ…TSVG) and 425 to 454 (QFSS…ASTP). The interval 443-455 (NNGPSGSGASTPV) is required for interaction with microtubules. 523–530 (GPPGNGKT) provides a ligand contact to ATP.

The protein belongs to the AAA ATPase family. Spastin subfamily. As to quaternary structure, homohexamer. The homohexamer is stabilized by ATP-binding. The homohexamer may adopt a ring conformation through which microtubules pass prior to being severed. Interacts with microtubules. Interacts with atl; may be involved in microtubule dynamics.

The protein localises to the membrane. It localises to the cytoplasm. The protein resides in the cytoskeleton. It is found in the microtubule organizing center. Its subcellular location is the centrosome. The protein localises to the chromosome. It localises to the lipid droplet. It catalyses the reaction n ATP + n H2O + a microtubule = n ADP + n phosphate + (n+1) alpha/beta tubulin heterodimers.. Its function is as follows. ATP-dependent microtubule severing protein. Stimulates microtubule minus-end depolymerization and poleward microtubule flux in the mitotic spindle. Regulates microtubule stability in the neuromuscular junction synapse. Involved in lipid metabolism by regulating the size and distribution of lipid droplets. Involved in axon regeneration by regulating microtubule severing. This is Spastin from Drosophila erecta (Fruit fly).